Reading from the N-terminus, the 223-residue chain is MNYATAGVAASTVVENRDVTIERLHRAEPVDAARIVLGSTLVVGDVRIRIVEVEAYGGEKDGPWPDPASHSYRGRTPRNEVMFGPAGHLYVYRSYGMHFCMNVSYGPVGVAGGVLLRAGEVLDGCATVQARRPRVTRPAEWARGPGNLGSATGVTLAENGAALFESDSPVRLEVAESDGWVSGPRVGVSTAADRPWRFWIPESPAVSAYRRSPRAMSADEQMG.

The protein belongs to the DNA glycosylase MPG family.

This Rhodococcus jostii (strain RHA1) protein is Putative 3-methyladenine DNA glycosylase.